A 546-amino-acid polypeptide reads, in one-letter code: 2-isopropylmalate synthase (546 aa).

A Pyruvate carboxyltransferase domain is found at 8-271 (ILIFDTTLRD…NSFFKRNPDS (264 aa)). Positions 17, 208, 210, and 244 each coordinate Mn(2+). Residues 408–546 (QLSLVQVSCG…NNTYISNPAN (139 aa)) are regulatory domain.

It belongs to the alpha-IPM synthase/homocitrate synthase family. LeuA type 1 subfamily. As to quaternary structure, homodimer. Mn(2+) is required as a cofactor.

Its subcellular location is the cytoplasm. The catalysed reaction is 3-methyl-2-oxobutanoate + acetyl-CoA + H2O = (2S)-2-isopropylmalate + CoA + H(+). It functions in the pathway amino-acid biosynthesis; L-leucine biosynthesis; L-leucine from 3-methyl-2-oxobutanoate: step 1/4. Its function is as follows. Catalyzes the condensation of the acetyl group of acetyl-CoA with 3-methyl-2-oxobutanoate (2-ketoisovalerate) to form 3-carboxy-3-hydroxy-4-methylpentanoate (2-isopropylmalate). The protein is 2-isopropylmalate synthase of Prochlorococcus marinus (strain MIT 9301).